Here is a 389-residue protein sequence, read N- to C-terminus: Oxysterol-binding protein 1 (389 aa).

2 coiled-coil regions span residues 1–31 (MGKK…NKPA) and 340–371 (KDDV…DEWK). The tract at residues 1–43 (MGKKDKNVSVEEEVDEAEIEKLAAENANKPAPQLTKEDLDAMD) is disordered.

This sequence belongs to the OSBP family. As to quaternary structure, interacts with dstC.

Its subcellular location is the cytoplasm. Functionally, may play a role in the regulation of the slug-fruiting body switch. The protein is Oxysterol-binding protein 1 (osbA) of Dictyostelium discoideum (Social amoeba).